Here is a 305-residue protein sequence, read N- to C-terminus: Diacylglycerol kinase (305 aa).

Residues 1–132 enclose the DAGKc domain; sequence MRKRARIIYN…VDIGKMNSRY (132 aa). ATP contacts are provided by residues 10 to 14, threonine 41, 67 to 73, and threonine 94; these read NPTSG and GDGTLNE. Mg(2+) contacts are provided by lysine 213, aspartate 216, and tyrosine 218. Residue glutamate 273 is the Proton acceptor of the active site.

Belongs to the diacylglycerol/lipid kinase family. Homodimer. The cofactor is Mg(2+).

It carries out the reaction a 1,2-diacyl-sn-glycerol + ATP = a 1,2-diacyl-sn-glycero-3-phosphate + ADP + H(+). Its function is as follows. Catalyzes the phosphorylation of diacylglycerol (DAG) into phosphatidic acid. Is a key enzyme involved in the production of lipoteichoic acid by reintroducing DAG formed from the breakdown of membrane phospholipids into the phosphatidylglycerol biosynthetic pathway. The protein is Diacylglycerol kinase (dagK) of Staphylococcus saprophyticus subsp. saprophyticus (strain ATCC 15305 / DSM 20229 / NCIMB 8711 / NCTC 7292 / S-41).